The sequence spans 230 residues: uncharacterized protein (230 aa).

The next 7 membrane-spanning stretches (helical) occupy residues 8-28, 45-65, 72-92, 109-129, 141-161, 176-196, and 203-223; these read SLIL…TMAF, SIIL…FIIF, LVLL…FLYL, PFSL…SVIS, IYVL…LLLA, MGIL…AIIF, and IYFL…LILF.

This sequence to P.aeruginosa PA0043 and M.thermoautotrophicum MTH1451.

Its subcellular location is the cell membrane. This is an uncharacterized protein from Aquifex aeolicus (strain VF5).